The sequence spans 478 residues: Argininosuccinate lyase (478 aa).

The protein belongs to the lyase 1 family. Argininosuccinate lyase subfamily.

The protein resides in the cytoplasm. The catalysed reaction is 2-(N(omega)-L-arginino)succinate = fumarate + L-arginine. It functions in the pathway amino-acid biosynthesis; L-arginine biosynthesis; L-arginine from L-ornithine and carbamoyl phosphate: step 3/3. In Rhodospirillum rubrum (strain ATCC 11170 / ATH 1.1.1 / DSM 467 / LMG 4362 / NCIMB 8255 / S1), this protein is Argininosuccinate lyase.